We begin with the raw amino-acid sequence, 127 residues long: Aspartate 1-decarboxylase (127 aa).

Serine 25 serves as the catalytic Schiff-base intermediate with substrate; via pyruvic acid. Serine 25 is subject to Pyruvic acid (Ser). A substrate-binding site is contributed by threonine 57. The active-site Proton donor is tyrosine 58. Substrate is bound at residue 73–75 (GAA).

Belongs to the PanD family. In terms of assembly, heterooctamer of four alpha and four beta subunits. Pyruvate serves as cofactor. Post-translationally, is synthesized initially as an inactive proenzyme, which is activated by self-cleavage at a specific serine bond to produce a beta-subunit with a hydroxyl group at its C-terminus and an alpha-subunit with a pyruvoyl group at its N-terminus.

It localises to the cytoplasm. The enzyme catalyses L-aspartate + H(+) = beta-alanine + CO2. It participates in cofactor biosynthesis; (R)-pantothenate biosynthesis; beta-alanine from L-aspartate: step 1/1. In terms of biological role, catalyzes the pyruvoyl-dependent decarboxylation of aspartate to produce beta-alanine. This is Aspartate 1-decarboxylase from Shouchella clausii (strain KSM-K16) (Alkalihalobacillus clausii).